The chain runs to 48 residues: uncharacterized protein (48 aa).

This is an uncharacterized protein from Acidianus convivator (ATV).